A 37-amino-acid polypeptide reads, in one-letter code: Large ribosomal subunit protein bL36 (37 aa).

It belongs to the bacterial ribosomal protein bL36 family.

The protein is Large ribosomal subunit protein bL36 of Staphylococcus carnosus (strain TM300).